A 137-amino-acid polypeptide reads, in one-letter code: Transcription antitermination protein NusB (137 aa).

It belongs to the NusB family.

In terms of biological role, involved in transcription antitermination. Required for transcription of ribosomal RNA (rRNA) genes. Binds specifically to the boxA antiterminator sequence of the ribosomal RNA (rrn) operons. The sequence is that of Transcription antitermination protein NusB from Aeromonas hydrophila subsp. hydrophila (strain ATCC 7966 / DSM 30187 / BCRC 13018 / CCUG 14551 / JCM 1027 / KCTC 2358 / NCIMB 9240 / NCTC 8049).